The chain runs to 317 residues: Probable cell division protein WhiA (317 aa).

Positions 267-300 form a DNA-binding region, H-T-H motif; it reads SLKELGEMLHPPVGKSGVNHRLRRLELIARQVRG.

Belongs to the WhiA family.

In terms of biological role, involved in cell division and chromosome segregation. The chain is Probable cell division protein WhiA from Moorella thermoacetica (strain ATCC 39073 / JCM 9320).